Consider the following 313-residue polypeptide: Pre-mRNA-splicing factor 38A (313 aa).

An N-terminal protein interaction domain region spans residues 1-179 (MANRTVKDAN…VLEEAELLDP (179 aa)). Residues 172–201 (EEAELLDPRISALEEDLDEVETSEEEDDED) adopt a coiled-coil conformation. The segment at 182-313 (SALEEDLDEV…SHKRSRRGNE (132 aa)) is disordered. Over residues 184–202 (LEEDLDEVETSEEEDDEDE) the composition is skewed to acidic residues. The span at 203-224 (KPERMQSPEPHRRSYRDMDRPR) shows a compositional bias: basic and acidic residues. Composition is skewed to basic residues over residues 225-250 (RSPS…RSPS), 260-294 (HRSK…RSHS), and 302-313 (KKSHKRSRRGNE).

Belongs to the PRP38 family. As to quaternary structure, component of the spliceosome B complex.

The protein resides in the nucleus. Functionally, involved in pre-mRNA splicing as a component of the spliceosome. This Danio rerio (Zebrafish) protein is Pre-mRNA-splicing factor 38A (prpf38a).